Here is a 191-residue protein sequence, read N- to C-terminus: Large ribosomal subunit protein bL12cz (191 aa).

A chloroplast-targeting transit peptide spans Met1–Ala58.

Belongs to the bacterial ribosomal protein bL12 family.

The protein localises to the plastid. The protein resides in the chloroplast. The chain is Large ribosomal subunit protein bL12cz (RPL12A) from Arabidopsis thaliana (Mouse-ear cress).